The chain runs to 870 residues: Protein RRP6-like 2 (870 aa).

One can recognise a 3'-5' exonuclease domain in the interval 263 to 428 (VQEVKDLKEL…YIYDLIKLEL (166 aa)). Positions 479–559 (NAAQLAIVAG…RQSMQHYAAF (81 aa)) constitute an HRDC domain. Disordered stretches follow at residues 583–605 (SEKK…SSQL), 649–668 (GALL…EKVK), 688–775 (TEKV…EDEP), and 821–870 (FGEG…SFKN). Composition is skewed to basic and acidic residues over residues 720–729 (SKEDGVKELK) and 821–834 (FGEG…KREA). Residues 840–849 (KGSTQEQSEF) are compositionally biased toward polar residues.

The protein resides in the nucleus. The protein localises to the nucleolus. It is found in the cytoplasm. In terms of biological role, acts as an important epigenetic regulator through multiple silencing mechanisms. Involved in association with RRP6L1 in the silencing of the solo LTR locus. Controls levels of non-coding RNAs (ncRNAs) from the solo LTR locus. Seems to function independently of the RNA-mediated gene silencing (RdDM) pathway. Functions redundantly with RRP6L1 in the regulation of FLC locus. Participates in the maintenance of trimethylated 'Lys-27' (H3K27me3) at FLC locus via the regulation of antisense long non-coding RNAs (lncRNAs) and the regulation of diverse antisense RNAs derived from the FLC locus. Seems not involved in the exosomal RNA degradation. May be involved in poly(A)-mediated RNA degradation. The protein is Protein RRP6-like 2 of Arabidopsis thaliana (Mouse-ear cress).